The chain runs to 369 residues: 3-isopropylmalate dehydrogenase (369 aa).

Residue 77 to 90 (GPKYDVLDFSVKPE) participates in NAD(+) binding. 4 residues coordinate substrate: R97, R107, R135, and D226. Mg(2+)-binding residues include D226, D250, and D254. 289-301 (GSAPDIAGQGKAN) is a binding site for NAD(+).

Belongs to the isocitrate and isopropylmalate dehydrogenases family. LeuB type 1 subfamily. In terms of assembly, homodimer. The cofactor is Mg(2+). Mn(2+) is required as a cofactor.

The protein localises to the cytoplasm. It carries out the reaction (2R,3S)-3-isopropylmalate + NAD(+) = 4-methyl-2-oxopentanoate + CO2 + NADH. The protein operates within amino-acid biosynthesis; L-leucine biosynthesis; L-leucine from 3-methyl-2-oxobutanoate: step 3/4. Functionally, catalyzes the oxidation of 3-carboxy-2-hydroxy-4-methylpentanoate (3-isopropylmalate) to 3-carboxy-4-methyl-2-oxopentanoate. The product decarboxylates to 4-methyl-2 oxopentanoate. This is 3-isopropylmalate dehydrogenase from Cereibacter sphaeroides (strain ATCC 17023 / DSM 158 / JCM 6121 / CCUG 31486 / LMG 2827 / NBRC 12203 / NCIMB 8253 / ATH 2.4.1.) (Rhodobacter sphaeroides).